Here is a 156-residue protein sequence, read N- to C-terminus: Cyanate hydratase (156 aa).

Active-site residues include arginine 96, glutamate 99, and serine 122.

Belongs to the cyanase family.

The enzyme catalyses cyanate + hydrogencarbonate + 3 H(+) = NH4(+) + 2 CO2. Its function is as follows. Catalyzes the reaction of cyanate with bicarbonate to produce ammonia and carbon dioxide. The polypeptide is Cyanate hydratase (Pseudomonas entomophila (strain L48)).